Here is a 150-residue protein sequence, read N- to C-terminus: Translation machinery-associated protein 17 (150 aa).

Phosphoserine is present on residues serine 24 and serine 68. The segment at 110–139 (RKTGHGKSKHEVEAKDNTNKGPDVDMDNSN) is disordered. A compositionally biased stretch (basic and acidic residues) spans 118-127 (KHEVEAKDNT).

In terms of assembly, interacts with RPT6. Interacts with the 40S and 60S ribosomal subunits.

The protein localises to the cytoplasm. It is found in the nucleus. Functionally, ATPase-dedicated chaperone that assists the formation of the RPT6-RPT3 ATPase pair, an early step in proteasome assembly. Plays a key role in maintaining homeostatic proteasome levels and adjusting proteasome assembly when demands increase, such as during proteasome stresses. Function overlaps with RPN14. This Saccharomyces cerevisiae (strain ATCC 204508 / S288c) (Baker's yeast) protein is Translation machinery-associated protein 17 (TMA17).